We begin with the raw amino-acid sequence, 129 residues long: UPF0325 protein ECA1027 (129 aa).

It belongs to the UPF0325 family.

The polypeptide is UPF0325 protein ECA1027 (Pectobacterium atrosepticum (strain SCRI 1043 / ATCC BAA-672) (Erwinia carotovora subsp. atroseptica)).